Reading from the N-terminus, the 86-residue chain is Class II hydrophobin 2 (86 aa).

Residues 1–15 form the signal peptide; the sequence is MQFFAVALFATSALA. Disulfide bonds link Cys18–Cys67, Cys28–Cys58, Cys29–Cys41, and Cys68–Cys79.

The protein belongs to the cerato-ulmin hydrophobin family. In terms of assembly, homodimer. Homodimers further self-assemble to form highly ordered films at water-air interfaces through intermolecular interactions.

It localises to the secreted. It is found in the spore wall. The protein localises to the cell wall. In terms of biological role, aerial growth, conidiation, and dispersal of filamentous fungi in the environment rely upon a capability of their secreting small amphipathic proteins called hydrophobins (HPBs) with low sequence identity. Class I can self-assemble into an outermost layer of rodlet bundles on aerial cell surfaces, conferring cellular hydrophobicity that supports fungal growth, development and dispersal; whereas Class II form highly ordered films at water-air interfaces through intermolecular interactions but contribute nothing to the rodlet structure. Hbf2 is a class II hydrophobin that is involved in sporuration. The polypeptide is Class II hydrophobin 2 (Hypocrea jecorina (Trichoderma reesei)).